Reading from the N-terminus, the 152-residue chain is Large ribosomal subunit protein uL15 (152 aa).

Residues 1–56 (MTSTLNTLKSNLGSRKKKLRKGRGIAAGQGASCGFGMRGQKSRSGRPTRPGFEGGQ) are disordered. Positions 14 to 23 (SRKKKLRKGR) are enriched in basic residues. Positions 25 to 37 (IAAGQGASCGFGM) are enriched in gly residues.

It belongs to the universal ribosomal protein uL15 family. Part of the 50S ribosomal subunit.

In terms of biological role, binds to the 23S rRNA. The protein is Large ribosomal subunit protein uL15 of Prochlorococcus marinus (strain MIT 9515).